The primary structure comprises 462 residues: UDP-N-acetylmuramoylalanine--D-glutamate ligase (462 aa).

111–117 (GTNGKTT) contacts ATP.

It belongs to the MurCDEF family.

Its subcellular location is the cytoplasm. It carries out the reaction UDP-N-acetyl-alpha-D-muramoyl-L-alanine + D-glutamate + ATP = UDP-N-acetyl-alpha-D-muramoyl-L-alanyl-D-glutamate + ADP + phosphate + H(+). It participates in cell wall biogenesis; peptidoglycan biosynthesis. In terms of biological role, cell wall formation. Catalyzes the addition of glutamate to the nucleotide precursor UDP-N-acetylmuramoyl-L-alanine (UMA). This Trichodesmium erythraeum (strain IMS101) protein is UDP-N-acetylmuramoylalanine--D-glutamate ligase.